A 337-amino-acid chain; its full sequence is MENPRRVQILRAIVEDYVHSREPVGSKALVERHRLPVSSATVRNDMAALEEAGLIVAPHTSSGRIPTDRGYRVFVDQIAALQPLTGAQRRAIQVFLEGAHDLDDVMERTVRLLAQLTHQAAVIQYPVRAGITVRHVELVDVGAGTVLVILIPTSGRVAQRAVELAEPLDEVQLLELRARVLARVLGSTLETVPGRVAGLAEELPEALRHAGDRVSEALAVLAAASDEHRLVMAGTANLARFSGDFPQSISPVLEALEEQVTMLRLLSAMQQDERGVAVRIGSEECDDPLAEASVVATGYGPHAASKVGVVGPTRMDYPTTMAAVRAVARYLSRNLGD.

Belongs to the HrcA family.

In terms of biological role, negative regulator of class I heat shock genes (grpE-dnaK-dnaJ and groELS operons). Prevents heat-shock induction of these operons. The chain is Heat-inducible transcription repressor HrcA from Kocuria rhizophila (strain ATCC 9341 / DSM 348 / NBRC 103217 / DC2201).